Here is a 397-residue protein sequence, read N- to C-terminus: Tryptophan synthase beta chain (397 aa).

Residue K86 is modified to N6-(pyridoxal phosphate)lysine.

It belongs to the TrpB family. As to quaternary structure, tetramer of two alpha and two beta chains. Pyridoxal 5'-phosphate serves as cofactor.

It catalyses the reaction (1S,2R)-1-C-(indol-3-yl)glycerol 3-phosphate + L-serine = D-glyceraldehyde 3-phosphate + L-tryptophan + H2O. It participates in amino-acid biosynthesis; L-tryptophan biosynthesis; L-tryptophan from chorismate: step 5/5. The beta subunit is responsible for the synthesis of L-tryptophan from indole and L-serine. In Edwardsiella ictaluri (strain 93-146), this protein is Tryptophan synthase beta chain.